The sequence spans 267 residues: Probable 3-methyl-2-oxobutanoate hydroxymethyltransferase (267 aa).

It belongs to the PanB family.

It catalyses the reaction 3-methyl-2-oxobutanoate + (6R)-5,10-methylene-5,6,7,8-tetrahydrofolate + H2O = 2-dehydropantoate + (6S)-5,6,7,8-tetrahydrofolate. The protein operates within cofactor biosynthesis; (R)-pantothenate biosynthesis; (R)-pantoate from 3-methyl-2-oxobutanoate: step 1/2. The sequence is that of Probable 3-methyl-2-oxobutanoate hydroxymethyltransferase from Schizosaccharomyces pombe (strain 972 / ATCC 24843) (Fission yeast).